Here is a 329-residue protein sequence, read N- to C-terminus: Lipoyl synthase (329 aa).

The tract at residues 1-23 (MTDLTATPAPAEPAASAYDPTAK) is disordered. Residues C76, C81, C87, C102, C106, C109, and S316 each coordinate [4Fe-4S] cluster. Positions 87 to 305 (CFGKGTATFM…EEEAYKMGFT (219 aa)) constitute a Radical SAM core domain.

Belongs to the radical SAM superfamily. Lipoyl synthase family. Requires [4Fe-4S] cluster as cofactor.

Its subcellular location is the cytoplasm. The enzyme catalyses [[Fe-S] cluster scaffold protein carrying a second [4Fe-4S](2+) cluster] + N(6)-octanoyl-L-lysyl-[protein] + 2 oxidized [2Fe-2S]-[ferredoxin] + 2 S-adenosyl-L-methionine + 4 H(+) = [[Fe-S] cluster scaffold protein] + N(6)-[(R)-dihydrolipoyl]-L-lysyl-[protein] + 4 Fe(3+) + 2 hydrogen sulfide + 2 5'-deoxyadenosine + 2 L-methionine + 2 reduced [2Fe-2S]-[ferredoxin]. It participates in protein modification; protein lipoylation via endogenous pathway; protein N(6)-(lipoyl)lysine from octanoyl-[acyl-carrier-protein]: step 2/2. In terms of biological role, catalyzes the radical-mediated insertion of two sulfur atoms into the C-6 and C-8 positions of the octanoyl moiety bound to the lipoyl domains of lipoate-dependent enzymes, thereby converting the octanoylated domains into lipoylated derivatives. The polypeptide is Lipoyl synthase (Burkholderia mallei (strain NCTC 10247)).